A 193-amino-acid chain; its full sequence is uncharacterized protein (193 aa).

The chain crosses the membrane as a helical span at residues 153-170; it reads WRYWAVIALIAAVLIYLY.

Its subcellular location is the membrane. This is an uncharacterized protein from Invertebrate iridescent virus 6 (IIV-6).